The primary structure comprises 639 residues: CREB3 regulatory factor (639 aa).

The tract at residues 302 to 422 (PLPQEGPGSL…SVEDLKEVTS (121 aa)) is disordered. Positions 310–328 (SLAAGESSSLSASTSVSDS) are enriched in low complexity. Residues 339–351 (LFVSDNLGEQPTK) show a composition bias toward polar residues. The segment covering 355 to 370 (EEDEEDEEDVDDEDHD) has biased composition (acidic residues). Positions 371 to 380 (EGFGSEHELS) are enriched in basic and acidic residues. A compositionally biased stretch (acidic residues) spans 381-401 (ENEEEEEEEEDYEDDKDDDIS). Residues 521–584 (TARPRSRKEK…VNRVQNPRDE (64 aa)) form the bZIP domain. Positions 523–532 (RPRSRKEKNK) are basic motif. The interval 533–540 (LASRACRL) is leucine-zipper.

The protein belongs to the bZIP family. CREBRF subfamily. In terms of assembly, interacts (via leucine-zipper domain) with CREB3 (via leucine-zipper domain); the interaction promotes CREB3 degradation. Post-translationally, probably degraded by the proteasome.

Its subcellular location is the nucleus. Functionally, acts as a negative regulator of the endoplasmic reticulum stress response or unfolded protein response (UPR). Represses the transcriptional activity of CREB3 during the UPR. Recruits CREB3 into nuclear foci. The sequence is that of CREB3 regulatory factor (CREBRF) from Homo sapiens (Human).